Reading from the N-terminus, the 205-residue chain is MDLTVINDRGEQVASVAASDETFGRDYNEALVHQVVTAFQANARSGNRAQQTRAEVSASTHKPWRQKGTGRARSGRASSPIWRGGGVTFPNKPNENFTHKVNRKMYRAGLAAILSQLAREGKLKVVESLGIESPKTKLLAGKLKSMGYGKVMIIADAIDDNLWLSSRNLPNVYVVEPHQADPWSLVKFGNVLITKAAIKQFEEMV.

A compositionally biased stretch (polar residues) spans 43–60; the sequence is ARSGNRAQQTRAEVSAST. A disordered region spans residues 43 to 96; it reads ARSGNRAQQTRAEVSASTHKPWRQKGTGRARSGRASSPIWRGGGVTFPNKPNEN. Residues 62–74 are compositionally biased toward basic residues; it reads KPWRQKGTGRARS.

It belongs to the universal ribosomal protein uL4 family. In terms of assembly, part of the 50S ribosomal subunit.

Its function is as follows. One of the primary rRNA binding proteins, this protein initially binds near the 5'-end of the 23S rRNA. It is important during the early stages of 50S assembly. It makes multiple contacts with different domains of the 23S rRNA in the assembled 50S subunit and ribosome. Forms part of the polypeptide exit tunnel. The chain is Large ribosomal subunit protein uL4 from Thiobacillus denitrificans (strain ATCC 25259 / T1).